The chain runs to 371 residues: Phospho-N-acetylmuramoyl-pentapeptide-transferase (371 aa).

The next 9 membrane-spanning stretches (helical) occupy residues 25–45 (TLLAAVTSLTIGFVIAPWLIA), 77–94 (MGGLIIFLSVFTSAALWA), 136–156 (IGWQSLATVVALGLLLWHPAS), 172–192 (LIPHMHWAVLLVLIYLWIVGF), 204–224 (GLAIGCTIPVALVFGIMAYVA), 240–260 (GTGELAVICGALIGGCMAFLW), 269–289 (FMGDTGSLALGGLIGVMAFMI), 296–316 (VIVGGVFVAEMLSVVVQVGVF), and 348–368 (KVVLRFWVLSLGCALAGLATL).

This sequence belongs to the glycosyltransferase 4 family. MraY subfamily. The cofactor is Mg(2+).

Its subcellular location is the cell inner membrane. The enzyme catalyses UDP-N-acetyl-alpha-D-muramoyl-L-alanyl-gamma-D-glutamyl-meso-2,6-diaminopimeloyl-D-alanyl-D-alanine + di-trans,octa-cis-undecaprenyl phosphate = di-trans,octa-cis-undecaprenyl diphospho-N-acetyl-alpha-D-muramoyl-L-alanyl-D-glutamyl-meso-2,6-diaminopimeloyl-D-alanyl-D-alanine + UMP. The protein operates within cell wall biogenesis; peptidoglycan biosynthesis. In terms of biological role, catalyzes the initial step of the lipid cycle reactions in the biosynthesis of the cell wall peptidoglycan: transfers peptidoglycan precursor phospho-MurNAc-pentapeptide from UDP-MurNAc-pentapeptide onto the lipid carrier undecaprenyl phosphate, yielding undecaprenyl-pyrophosphoryl-MurNAc-pentapeptide, known as lipid I. The chain is Phospho-N-acetylmuramoyl-pentapeptide-transferase from Opitutus terrae (strain DSM 11246 / JCM 15787 / PB90-1).